We begin with the raw amino-acid sequence, 269 residues long: 4-hydroxy-tetrahydrodipicolinate reductase (269 aa).

Residues 11–16 and Glu37 each bind NAD(+); that span reads GASGRM. An NADP(+)-binding site is contributed by Arg38. Residues 101 to 103 and 125 to 128 contribute to the NAD(+) site; these read GTT and AGNM. The active-site Proton donor/acceptor is the His158. His159 is a binding site for (S)-2,3,4,5-tetrahydrodipicolinate. Lys162 acts as the Proton donor in catalysis. 168-169 is a (S)-2,3,4,5-tetrahydrodipicolinate binding site; that stretch reads GT.

The protein belongs to the DapB family.

The protein resides in the cytoplasm. The enzyme catalyses (S)-2,3,4,5-tetrahydrodipicolinate + NAD(+) + H2O = (2S,4S)-4-hydroxy-2,3,4,5-tetrahydrodipicolinate + NADH + H(+). It carries out the reaction (S)-2,3,4,5-tetrahydrodipicolinate + NADP(+) + H2O = (2S,4S)-4-hydroxy-2,3,4,5-tetrahydrodipicolinate + NADPH + H(+). It functions in the pathway amino-acid biosynthesis; L-lysine biosynthesis via DAP pathway; (S)-tetrahydrodipicolinate from L-aspartate: step 4/4. Catalyzes the conversion of 4-hydroxy-tetrahydrodipicolinate (HTPA) to tetrahydrodipicolinate. The polypeptide is 4-hydroxy-tetrahydrodipicolinate reductase (Ruegeria sp. (strain TM1040) (Silicibacter sp.)).